The sequence spans 60 residues: MAKLLVKQVRSKINCPLSQKRGLEALGLRKLGQVVEHESNPAILGMINKVKHLVSVEEAK.

It belongs to the universal ribosomal protein uL30 family. As to quaternary structure, part of the 50S ribosomal subunit.

In Flavobacterium johnsoniae (strain ATCC 17061 / DSM 2064 / JCM 8514 / BCRC 14874 / CCUG 350202 / NBRC 14942 / NCIMB 11054 / UW101) (Cytophaga johnsonae), this protein is Large ribosomal subunit protein uL30.